A 235-amino-acid chain; its full sequence is 2-C-methyl-D-erythritol 4-phosphate cytidylyltransferase (235 aa).

The protein belongs to the IspD/TarI cytidylyltransferase family. IspD subfamily.

It carries out the reaction 2-C-methyl-D-erythritol 4-phosphate + CTP + H(+) = 4-CDP-2-C-methyl-D-erythritol + diphosphate. It functions in the pathway isoprenoid biosynthesis; isopentenyl diphosphate biosynthesis via DXP pathway; isopentenyl diphosphate from 1-deoxy-D-xylulose 5-phosphate: step 2/6. Functionally, catalyzes the formation of 4-diphosphocytidyl-2-C-methyl-D-erythritol from CTP and 2-C-methyl-D-erythritol 4-phosphate (MEP). This Pseudomonas entomophila (strain L48) protein is 2-C-methyl-D-erythritol 4-phosphate cytidylyltransferase.